The primary structure comprises 317 residues: Acetyl-coenzyme A carboxylase carboxyl transferase subunit alpha (317 aa).

The region spanning 39-293 (RLESRVNDAM…GDVIAKALAD (255 aa)) is the CoA carboxyltransferase C-terminal domain.

This sequence belongs to the AccA family. Acetyl-CoA carboxylase is a heterohexamer composed of biotin carboxyl carrier protein (AccB), biotin carboxylase (AccC) and two subunits each of ACCase subunit alpha (AccA) and ACCase subunit beta (AccD).

It is found in the cytoplasm. The enzyme catalyses N(6)-carboxybiotinyl-L-lysyl-[protein] + acetyl-CoA = N(6)-biotinyl-L-lysyl-[protein] + malonyl-CoA. The protein operates within lipid metabolism; malonyl-CoA biosynthesis; malonyl-CoA from acetyl-CoA: step 1/1. Component of the acetyl coenzyme A carboxylase (ACC) complex. First, biotin carboxylase catalyzes the carboxylation of biotin on its carrier protein (BCCP) and then the CO(2) group is transferred by the carboxyltransferase to acetyl-CoA to form malonyl-CoA. This chain is Acetyl-coenzyme A carboxylase carboxyl transferase subunit alpha, found in Agrobacterium fabrum (strain C58 / ATCC 33970) (Agrobacterium tumefaciens (strain C58)).